Reading from the N-terminus, the 647-residue chain is 1-deoxy-D-xylulose-5-phosphate synthase (647 aa).

Residues His-72 and 113-115 (GHA) each bind thiamine diphosphate. Asp-144 is a Mg(2+) binding site. Thiamine diphosphate is bound by residues 145–146 (GA), Asn-174, Tyr-287, and Glu-370. Asn-174 serves as a coordination point for Mg(2+).

The protein belongs to the transketolase family. DXPS subfamily. Homodimer. Mg(2+) serves as cofactor. Thiamine diphosphate is required as a cofactor.

The enzyme catalyses D-glyceraldehyde 3-phosphate + pyruvate + H(+) = 1-deoxy-D-xylulose 5-phosphate + CO2. It participates in metabolic intermediate biosynthesis; 1-deoxy-D-xylulose 5-phosphate biosynthesis; 1-deoxy-D-xylulose 5-phosphate from D-glyceraldehyde 3-phosphate and pyruvate: step 1/1. In terms of biological role, catalyzes the acyloin condensation reaction between C atoms 2 and 3 of pyruvate and glyceraldehyde 3-phosphate to yield 1-deoxy-D-xylulose-5-phosphate (DXP). The chain is 1-deoxy-D-xylulose-5-phosphate synthase from Synechococcus sp. (strain WH7803).